A 677-amino-acid chain; its full sequence is UvrABC system protein B (677 aa).

Residues 25 to 412 (DGVNSGREYQ…SGAIIEQVIR (388 aa)) form the Helicase ATP-binding domain. 38 to 45 (GATGTGKT) is a binding site for ATP. Positions 91–114 (YYDYYQPEAYVPVSDTYIAKTSSI) match the Beta-hairpin motif. The Helicase C-terminal domain maps to 429 to 591 (QVEDLLDEIR…IVPMPAGKKA (163 aa)). A UVR domain is found at 639–674 (PQLIDELETKMKKSAKDLDFENAAKLRDKIHQLRKK).

Belongs to the UvrB family. In terms of assembly, forms a heterotetramer with UvrA during the search for lesions. Interacts with UvrC in an incision complex.

The protein resides in the cytoplasm. Its function is as follows. The UvrABC repair system catalyzes the recognition and processing of DNA lesions. A damage recognition complex composed of 2 UvrA and 2 UvrB subunits scans DNA for abnormalities. Upon binding of the UvrA(2)B(2) complex to a putative damaged site, the DNA wraps around one UvrB monomer. DNA wrap is dependent on ATP binding by UvrB and probably causes local melting of the DNA helix, facilitating insertion of UvrB beta-hairpin between the DNA strands. Then UvrB probes one DNA strand for the presence of a lesion. If a lesion is found the UvrA subunits dissociate and the UvrB-DNA preincision complex is formed. This complex is subsequently bound by UvrC and the second UvrB is released. If no lesion is found, the DNA wraps around the other UvrB subunit that will check the other stand for damage. The protein is UvrABC system protein B of Prochlorococcus marinus (strain SARG / CCMP1375 / SS120).